Consider the following 147-residue polypeptide: Bis(5'-nucleosyl)-tetraphosphatase [asymmetrical] (147 aa).

Residue Ala-2 is modified to N-acetylalanine. The Nudix hydrolase domain occupies 2–139 (ALRACGLIIF…EMKATLQEGH (138 aa)). The Nudix box motif lies at 43 to 64 (GHVDPGENDLETALRETREETG).

Belongs to the Nudix hydrolase family. It depends on a divalent metal cation as a cofactor.

The catalysed reaction is P(1),P(4)-bis(5'-guanosyl) tetraphosphate + H2O = GMP + GTP + 2 H(+). It catalyses the reaction a 5'-end CoA-ribonucleoside in mRNA + H2O = a 5'-end phospho-adenosine-phospho-ribonucleoside in mRNA + (R)-4'-phosphopantetheine + 2 H(+). The enzyme catalyses a 5'-end FAD-phospho-ribonucleoside in mRNA + H2O = a 5'-end phospho-adenosine-phospho-ribonucleoside in mRNA + FMN + 2 H(+). Its function is as follows. Catalyzes the asymmetric hydrolysis of diadenosine 5',5'''-P1,P4-tetraphosphate (Ap4A) to yield AMP and ATP. Exhibits decapping activity towards FAD-capped RNAs and dpCoA-capped RNAs in vitro. This is Bis(5'-nucleosyl)-tetraphosphatase [asymmetrical] (Nudt2) from Mus musculus (Mouse).